The sequence spans 228 residues: Superoxide dismutase [Mn], mitochondrial (228 aa).

A mitochondrion-targeting transit peptide spans 1-24 (MALRNLMTKKPFAGILTFRQQLRC). Positions 52, 100, 189, and 193 each coordinate Mn(2+).

The protein belongs to the iron/manganese superoxide dismutase family. As to quaternary structure, homotetramer. The cofactor is Mn(2+).

It is found in the mitochondrion matrix. The enzyme catalyses 2 superoxide + 2 H(+) = H2O2 + O2. In terms of biological role, destroys superoxide anion radicals which are normally produced within the cells and which are toxic to biological systems. In Capsicum annuum (Capsicum pepper), this protein is Superoxide dismutase [Mn], mitochondrial (SODA).